A 169-amino-acid polypeptide reads, in one-letter code: Probable metallophosphoesterase YsnB (169 aa).

Asp8, His10, Asp35, Asn54, His78, His107, and His109 together coordinate Mn(2+).

Belongs to the metallophosphoesterase superfamily. YfcE family. It depends on Mn(2+) as a cofactor.

The protein is Probable metallophosphoesterase YsnB (ysnB) of Bacillus subtilis (strain 168).